Here is a 344-residue protein sequence, read N- to C-terminus: Tetraacyldisaccharide 4'-kinase (344 aa).

Residue 65–72 participates in ATP binding; sequence HAGGTGKT.

The protein belongs to the LpxK family.

It carries out the reaction a lipid A disaccharide + ATP = a lipid IVA + ADP + H(+). Its pathway is glycolipid biosynthesis; lipid IV(A) biosynthesis; lipid IV(A) from (3R)-3-hydroxytetradecanoyl-[acyl-carrier-protein] and UDP-N-acetyl-alpha-D-glucosamine: step 6/6. Functionally, transfers the gamma-phosphate of ATP to the 4'-position of a tetraacyldisaccharide 1-phosphate intermediate (termed DS-1-P) to form tetraacyldisaccharide 1,4'-bis-phosphate (lipid IVA). This chain is Tetraacyldisaccharide 4'-kinase, found in Neisseria meningitidis serogroup B (strain ATCC BAA-335 / MC58).